Consider the following 174-residue polypeptide: Cytochrome c-type biogenesis protein CcmE (174 aa).

Over 1 to 8 the chain is Cytoplasmic; sequence MNPRRKSR. The chain crosses the membrane as a helical; Signal-anchor for type II membrane protein span at residues 9-29; sequence LSVVLFILLGISVASALVLYA. Residues 30-174 lie on the Periplasmic side of the membrane; it reads LRQNIDLFYT…QEKQFKEGNQ (145 aa). Residues His131 and Tyr135 each coordinate heme. The tract at residues 149–174 is disordered; the sequence is KPMGISDLKNESDRDRQEKQFKEGNQ. Basic and acidic residues predominate over residues 156–174; the sequence is LKNESDRDRQEKQFKEGNQ.

Belongs to the CcmE/CycJ family.

Its subcellular location is the cell inner membrane. In terms of biological role, heme chaperone required for the biogenesis of c-type cytochromes. Transiently binds heme delivered by CcmC and transfers the heme to apo-cytochromes in a process facilitated by CcmF and CcmH. The sequence is that of Cytochrome c-type biogenesis protein CcmE from Histophilus somni (strain 2336) (Haemophilus somnus).